The following is a 561-amino-acid chain: 3beta-hydroxysteroid-dehydrogenase/decarboxylase isoform 3 (561 aa).

Lys166 is an NAD(+) binding site. Residues 379-561 (VADILLWRNE…SDASSKPMFM (183 aa)) form the Reticulon domain. 3 helical membrane-spanning segments follow: residues 392-412 (FVSF…GNTF), 420-440 (LFIF…IFGF), and 504-524 (SLAA…FIYE).

This sequence belongs to the 3-beta-HSD family.

It localises to the endoplasmic reticulum membrane. It carries out the reaction a 3beta-hydroxysteroid-4alpha-carboxylate + NADP(+) = a 3-oxosteroid + CO2 + NADPH. The enzyme catalyses a 3beta-hydroxysteroid-4alpha-carboxylate + NAD(+) = a 3-oxosteroid + CO2 + NADH. Its pathway is steroid biosynthesis; zymosterol biosynthesis; zymosterol from lanosterol: step 4/6. The polypeptide is 3beta-hydroxysteroid-dehydrogenase/decarboxylase isoform 3 (3BETAHSD/D3) (Arabidopsis thaliana (Mouse-ear cress)).